The sequence spans 321 residues: Geranylgeranyl transferase type-2 subunit beta 1 (321 aa).

N-acetylserine is present on serine 2. PFTB repeat units follow at residues 14–55 (ADKH…DLLD), 62–103 (EEEV…ALFD), 110–151 (IGKV…SILK), 158–199 (VEKA…AITG), 206–247 (KDSL…IMID), and 254–296 (KAKL…SLLE). Geranylgeranyl diphosphate-binding positions include 184–186 (HAG) and 226–229 (RPEK). Positions 232 and 234 each coordinate Zn(2+). 235 to 238 (YSWW) provides a ligand contact to geranylgeranyl diphosphate. Position 284 (histidine 284) interacts with Zn(2+).

It belongs to the protein prenyltransferase subunit beta family. As to quaternary structure, heterotrimer composed of the alpha subunit RGTA, the beta subunit RGTB and REP; within this trimer, RGTA and RGTB form the catalytic component, while REP mediates peptide substrate binding. Zn(2+) is required as a cofactor. Requires Mg(2+) as cofactor.

The catalysed reaction is geranylgeranyl diphosphate + L-cysteinyl-[protein] = S-geranylgeranyl-L-cysteinyl-[protein] + diphosphate. With respect to regulation, the enzymatic reaction requires the aid of the Rab escort protein REP. Catalyzes the transfer of a geranylgeranyl moiety from geranylgeranyl diphosphate to both cysteines of Rab proteins with the C-terminal sequence -CCXX, CXXX, -XCCX and -XCXC, such as RABA1A, RABA2A, RABF2A and RABG2. Involved in the geranylgeranylation of RABA2A. In vitro, can prenylate PGGTI targets with the C-terminal sequence Cys-aliphatic-aliphatic-X (CaaX) with leucine in the terminal position. Substrates with the C-terminal sequence -CSIL such as ARAC11/ROP1 or GG2/AGG2 are prenylated independently of REP and when the beta subunit is associated with the alpha subunit RGTA1. Functionally, required for male fertility and root tip growth. The chain is Geranylgeranyl transferase type-2 subunit beta 1 from Arabidopsis thaliana (Mouse-ear cress).